Reading from the N-terminus, the 334-residue chain is Protein-methionine-sulfoxide reductase catalytic subunit MsrP (334 aa).

A signal peptide (tat-type signal) is located at residues 1 to 44 (MKKNQFLKESDVTAESVFFMKRRQVLKALGISAAALSLPHAAHA). Mo-molybdopterin is bound by residues Asn88, 91–92 (YE), Cys146, Thr181, Asn233, Arg238, and 249–251 (GIK).

This sequence belongs to the MsrP family. As to quaternary structure, heterodimer of a catalytic subunit (MsrP) and a heme-binding subunit (MsrQ). The cofactor is Mo-molybdopterin. Predicted to be exported by the Tat system. The position of the signal peptide cleavage has not been experimentally proven.

The protein resides in the periplasm. The catalysed reaction is L-methionyl-[protein] + a quinone + H2O = L-methionyl-(S)-S-oxide-[protein] + a quinol. The enzyme catalyses L-methionyl-[protein] + a quinone + H2O = L-methionyl-(R)-S-oxide-[protein] + a quinol. Part of the MsrPQ system that repairs oxidized periplasmic proteins containing methionine sulfoxide residues (Met-O), using respiratory chain electrons. Thus protects these proteins from oxidative-stress damage caused by reactive species of oxygen and chlorine generated by the host defense mechanisms. MsrPQ is essential for the maintenance of envelope integrity under bleach stress, rescuing a wide series of structurally unrelated periplasmic proteins from methionine oxidation, including the primary periplasmic chaperone SurA and the lipoprotein Pal. The catalytic subunit MsrP is non-stereospecific, being able to reduce both (R-) and (S-) diastereoisomers of methionine sulfoxide. This chain is Protein-methionine-sulfoxide reductase catalytic subunit MsrP, found in Shigella boydii serotype 18 (strain CDC 3083-94 / BS512).